Here is a 255-residue protein sequence, read N- to C-terminus: tRNA (guanine-N(7)-)-methyltransferase (255 aa).

S-adenosyl-L-methionine is bound by residues Glu64, Glu89, Asp116, and Asp138. Residue Asp138 is part of the active site. Substrate contacts are provided by residues Lys142, Asp174, and 212-215; that span reads TRYE.

Belongs to the class I-like SAM-binding methyltransferase superfamily. TrmB family.

The catalysed reaction is guanosine(46) in tRNA + S-adenosyl-L-methionine = N(7)-methylguanosine(46) in tRNA + S-adenosyl-L-homocysteine. The protein operates within tRNA modification; N(7)-methylguanine-tRNA biosynthesis. Catalyzes the formation of N(7)-methylguanine at position 46 (m7G46) in tRNA. The polypeptide is tRNA (guanine-N(7)-)-methyltransferase (Rhodospirillum rubrum (strain ATCC 11170 / ATH 1.1.1 / DSM 467 / LMG 4362 / NCIMB 8255 / S1)).